Here is a 293-residue protein sequence, read N- to C-terminus: MKTAIITDSTASIKEGEIQDVYVLPLQVIINGQDTYRDGKDIDYDRVYQLLKEHPQGLNISTSLPRQADLIELIEAIKDKYDRFVFLPLSKGLSGTYDMIVQAVKPLSTPKKEFVVLETSDIAISLKWLVQEVKALTDTNCPTKAIAEVVDQHKQSIFTAVTVKNLVQLRKGGRISGLKKIIATLLRVKPIIFFDKGVNTLSGKAFTFVQALEKIFTFVKSKFGDNFKIKRIGFCNAFTPVKAKEVKALILDFLHTNKITLQREIESSFITSAIIAHTGIDAFSISLLLDKNK.

Residues 3–289 form the DegV domain; it reads TAIITDSTAS…IDAFSISLLL (287 aa). Hexadecanoate contacts are provided by Thr62 and Ser94.

In terms of biological role, may bind long-chain fatty acids, such as palmitate, and may play a role in lipid transport or fatty acid metabolism. The polypeptide is DegV domain-containing protein MG326 homolog (Mycoplasma pneumoniae (strain ATCC 29342 / M129 / Subtype 1) (Mycoplasmoides pneumoniae)).